A 468-amino-acid polypeptide reads, in one-letter code: UDP-N-acetylmuramate--L-alanine ligase (468 aa).

118-124 (GTHGKTT) provides a ligand contact to ATP.

The protein belongs to the MurCDEF family.

It is found in the cytoplasm. The enzyme catalyses UDP-N-acetyl-alpha-D-muramate + L-alanine + ATP = UDP-N-acetyl-alpha-D-muramoyl-L-alanine + ADP + phosphate + H(+). It participates in cell wall biogenesis; peptidoglycan biosynthesis. Its function is as follows. Cell wall formation. The chain is UDP-N-acetylmuramate--L-alanine ligase from Roseobacter denitrificans (strain ATCC 33942 / OCh 114) (Erythrobacter sp. (strain OCh 114)).